Reading from the N-terminus, the 257-residue chain is tRNA dimethylallyltransferase (257 aa).

ATP is bound at residue 15–22 (GPTASGKS). 17 to 22 (TASGKS) is a substrate binding site.

The protein belongs to the IPP transferase family. As to quaternary structure, monomer. Requires Mg(2+) as cofactor.

It carries out the reaction adenosine(37) in tRNA + dimethylallyl diphosphate = N(6)-dimethylallyladenosine(37) in tRNA + diphosphate. Catalyzes the transfer of a dimethylallyl group onto the adenine at position 37 in tRNAs that read codons beginning with uridine, leading to the formation of N6-(dimethylallyl)adenosine (i(6)A). The polypeptide is tRNA dimethylallyltransferase (Oenococcus oeni (strain ATCC BAA-331 / PSU-1)).